A 723-amino-acid chain; its full sequence is Transcription factor E2F7 (723 aa).

The interval 121–146 (AEEEEEEELDDSCQYEALDESERRPS) is disordered. The span at 122 to 139 (EEEEEEELDDSCQYEALD) shows a compositional bias: acidic residues. 2 DNA-binding regions span residues 147 to 216 (RKQK…VWHG) and 264 to 349 (RKDK…KWIG). Polar residues-rich tracts occupy residues 356 to 370 (SSNS…SNSG) and 395 to 405 (LISSAPSTPHR). Disordered regions lie at residues 356-379 (SSNS…KMAR), 395-417 (LISS…YSRK), 489-546 (SLRK…ASFG), 650-689 (EHHG…SKSF), and 702-723 (QSAA…TAAN). Residues 494-503 (ERSEEDDHQT) show a composition bias toward basic and acidic residues. Residues 520–535 (SESLSSSTRRSPVCSP) are compositionally biased toward low complexity.

This sequence belongs to the E2F/DP family. Homodimer and heterodimer: mainly forms homodimers and, to a lesser extent, heterodimers with e2f8.

Its subcellular location is the nucleus. Functionally, atypical E2F transcription factor that participates in various processes such as angiogenesis and polyploidization of specialized cells. Mainly acts as a transcription repressor that binds DNA independently of DP proteins and specifically recognizes the E2 recognition site 5'-TTTC[CG]CGC-3'. Directly represses transcription of classical E2F transcription factors such as e2f1. Acts as a regulator of S-phase by recognizing and binding the E2-related site 5'-TTCCCGCC-3' and mediating repression of G1/S-regulated genes. Acts as a promoter of sprouting angiogenesis, possibly by acting as a transcription activator and promoting expression of vegfa. This Danio rerio (Zebrafish) protein is Transcription factor E2F7 (e2f7).